We begin with the raw amino-acid sequence, 49 residues long: Large ribosomal subunit protein eL40 (49 aa).

It belongs to the eukaryotic ribosomal protein eL40 family.

The chain is Large ribosomal subunit protein eL40 from Haloquadratum walsbyi (strain DSM 16790 / HBSQ001).